The chain runs to 100 residues: Small ribosomal subunit protein uS14c (100 aa).

Belongs to the universal ribosomal protein uS14 family. In terms of assembly, part of the 30S ribosomal subunit.

It localises to the plastid. It is found in the chloroplast. Functionally, binds 16S rRNA, required for the assembly of 30S particles. In Oedogonium cardiacum (Filamentous green alga), this protein is Small ribosomal subunit protein uS14c.